A 320-amino-acid chain; its full sequence is Malate dehydrogenase (320 aa).

NAD(+)-binding positions include 10-15 (GAGQIG) and Asp-34. Substrate is bound by residues Arg-83 and Arg-89. NAD(+) is bound by residues Asn-96 and 119-121 (ITN). Residues Asn-121 and Arg-152 each coordinate substrate. Residue His-176 is the Proton acceptor of the active site.

This sequence belongs to the LDH/MDH superfamily. MDH type 3 family.

It carries out the reaction (S)-malate + NAD(+) = oxaloacetate + NADH + H(+). In terms of biological role, catalyzes the reversible oxidation of malate to oxaloacetate. This is Malate dehydrogenase from Methylorubrum populi (strain ATCC BAA-705 / NCIMB 13946 / BJ001) (Methylobacterium populi).